The sequence spans 688 residues: Elongation factor G (688 aa).

The 275-residue stretch at 8-282 (EKTRNIGIIA…AVVDYLPAPC (275 aa)) folds into the tr-type G domain. GTP-binding positions include 17 to 24 (AHIDAGKT), 81 to 85 (DTPGH), and 135 to 138 (NKMD).

It belongs to the TRAFAC class translation factor GTPase superfamily. Classic translation factor GTPase family. EF-G/EF-2 subfamily.

The protein localises to the cytoplasm. Functionally, catalyzes the GTP-dependent ribosomal translocation step during translation elongation. During this step, the ribosome changes from the pre-translocational (PRE) to the post-translocational (POST) state as the newly formed A-site-bound peptidyl-tRNA and P-site-bound deacylated tRNA move to the P and E sites, respectively. Catalyzes the coordinated movement of the two tRNA molecules, the mRNA and conformational changes in the ribosome. This chain is Elongation factor G, found in Aster yellows witches'-broom phytoplasma (strain AYWB).